We begin with the raw amino-acid sequence, 292 residues long: Homoserine kinase (292 aa).

84-94 lines the ATP pocket; sequence PFSRGLGSSSA.

This sequence belongs to the GHMP kinase family. Homoserine kinase subfamily.

Its subcellular location is the cytoplasm. It carries out the reaction L-homoserine + ATP = O-phospho-L-homoserine + ADP + H(+). It functions in the pathway amino-acid biosynthesis; L-threonine biosynthesis; L-threonine from L-aspartate: step 4/5. Its function is as follows. Catalyzes the ATP-dependent phosphorylation of L-homoserine to L-homoserine phosphate. The protein is Homoserine kinase of Campylobacter hominis (strain ATCC BAA-381 / DSM 21671 / CCUG 45161 / LMG 19568 / NCTC 13146 / CH001A).